Reading from the N-terminus, the 336-residue chain is COP9 signalosome complex subunit 5 (336 aa).

Residues 44–181 (VRISSVAMIK…IGAFRTIPEG (138 aa)) form the MPN domain. Positions 127, 129, and 140 each coordinate Zn(2+). The short motif at 127–140 (HSHPGYGCWLSGID) is the JAMM motif element.

The protein belongs to the peptidase M67A family. CSN5 subfamily. In terms of assembly, component of the COP9 signalosome (CSN) complex.

The protein localises to the cytoplasm. It localises to the nucleus. In terms of biological role, catalytic component of the COP9 signalosome (CSN) complex that acts as an regulator of the ubiquitin (Ubl) conjugation pathway by mediating the deneddylation of the cullin subunit of SCF-type E3 ubiquitin-protein ligase complexes. The CSN complex is involved in the regulation of the circadian clock through its control of the stability of the SCF(FWD-1) complex. The protein is COP9 signalosome complex subunit 5 (csn-5) of Neurospora crassa (strain ATCC 24698 / 74-OR23-1A / CBS 708.71 / DSM 1257 / FGSC 987).